The following is a 552-amino-acid chain: Formate--tetrahydrofolate ligase (552 aa).

63-70 (TPFGEGKT) contributes to the ATP binding site.

Belongs to the formate--tetrahydrofolate ligase family.

It catalyses the reaction (6S)-5,6,7,8-tetrahydrofolate + formate + ATP = (6R)-10-formyltetrahydrofolate + ADP + phosphate. It participates in one-carbon metabolism; tetrahydrofolate interconversion. This Caldicellulosiruptor bescii (strain ATCC BAA-1888 / DSM 6725 / KCTC 15123 / Z-1320) (Anaerocellum thermophilum) protein is Formate--tetrahydrofolate ligase.